The sequence spans 265 residues: Eukaryotic translation initiation factor 3 subunit J (265 aa).

Disordered stretches follow at residues 1–113 (MPPS…DSDL) and 215–237 (SNEK…AAKT). Over residues 27 to 45 (DEEDGDVLDSWDAADDSEV) the composition is skewed to acidic residues. Residues 43 to 95 (SEVEREKAAKAAEAKAKAEAEAAANKKSKAQRIAEHKTRRKAAEDEEDDESDE) are a coiled coil. The segment covering 46 to 62 (EREKAAKAAEAKAKAEA) has biased composition (basic and acidic residues). Residues 86–97 (EDEEDDESDEDE) show a composition bias toward acidic residues. 2 stretches are compositionally biased toward basic and acidic residues: residues 98–113 (AEKR…DSDL) and 217–229 (EKMK…DKGS).

Belongs to the eIF-3 subunit J family. Component of the eukaryotic translation initiation factor 3 (eIF-3) complex.

The protein localises to the cytoplasm. Component of the eukaryotic translation initiation factor 3 (eIF-3) complex, which is involved in protein synthesis of a specialized repertoire of mRNAs and, together with other initiation factors, stimulates binding of mRNA and methionyl-tRNAi to the 40S ribosome. The eIF-3 complex specifically targets and initiates translation of a subset of mRNAs involved in cell proliferation. This chain is Eukaryotic translation initiation factor 3 subunit J (hcr1), found in Emericella nidulans (strain FGSC A4 / ATCC 38163 / CBS 112.46 / NRRL 194 / M139) (Aspergillus nidulans).